Consider the following 178-residue polypeptide: E1B protein, small T-antigen (178 aa).

The protein belongs to the adenoviridae E1B 19 kDa protein family.

The protein localises to the host cell membrane. It localises to the host nucleus envelope. It is found in the host nucleus lamina. Putative adenovirus Bcl-2 homolog that inhibits apoptosis induced by TNF or FAS pathways, as well as p53-mediated apoptosis. Without E1B 19K function, virus production is compromised because of premature death of host cell. Interacts with Bax protein in cell lysates. The protein is E1B protein, small T-antigen of Human adenovirus B serotype 7 (HAdV-7).